The primary structure comprises 276 residues: Undecaprenyl-diphosphatase (276 aa).

A run of 7 helical transmembrane segments spans residues Ala-48 to Phe-68, Leu-92 to Glu-112, Leu-119 to Ala-139, Ile-155 to Phe-175, Ala-196 to Val-216, Phe-229 to Leu-249, and Ile-255 to Val-275.

It belongs to the UppP family.

The protein localises to the cell membrane. It catalyses the reaction di-trans,octa-cis-undecaprenyl diphosphate + H2O = di-trans,octa-cis-undecaprenyl phosphate + phosphate + H(+). Its function is as follows. Catalyzes the dephosphorylation of undecaprenyl diphosphate (UPP). Confers resistance to bacitracin. The chain is Undecaprenyl-diphosphatase from Bacillus velezensis (strain DSM 23117 / BGSC 10A6 / LMG 26770 / FZB42) (Bacillus amyloliquefaciens subsp. plantarum).